A 503-amino-acid chain; its full sequence is Glucosaminyl-phosphatidylinositol-acyltransferase PIGW (503 aa).

At 1 to 21 the chain is on the lumenal side; that stretch reads MSQKQMKEAFVSNQNGTSVLE. Asparagine 15 carries an N-linked (GlcNAc...) asparagine glycan. Residues 22–42 traverse the membrane as a helical segment; that stretch reads ITEGLCLPALCILCRGLLIIL. Over 43-56 the chain is Cytoplasmic; that stretch reads SQQLCSSLHNSRTR. The helical transmembrane segment at 57-75 threads the bilayer; the sequence is FLVDFAFLIVPLVTTLTIF. Topologically, residues 76 to 78 are lumenal; that stretch reads SSF. Residues 79–98 form a helical membrane-spanning segment; that stretch reads VLLEYLVAIILGAGLLYEIY. Topologically, residues 99 to 131 are cytoplasmic; that stretch reads CRRTCYARMPFQKICEKFLKVSLESEHIPAISC. Residues 132 to 152 form a helical membrane-spanning segment; that stretch reads FRVVNSAFTAVAILAVDFPLF. Over 153 to 160 the chain is Lumenal; the sequence is PRRYAKTE. A helical membrane pass occupies residues 161–181; sequence LYGTGAMDYGVGGFIFGSAMV. Over 182–201 the chain is Cytoplasmic; the sequence is SPEVRRKYTKGSRFCYLTKS. The chain crosses the membrane as a helical span at residues 202-222; the sequence is LYSLWPLVFLGVGRLVAIKSV. The Lumenal segment spans residues 223 to 236; it reads DYQEHLTEYGVHWN. The chain crosses the membrane as a helical span at residues 237–257; the sequence is FFFTLIAVKLITSLLLLICPL. Residues 258–259 are Cytoplasmic-facing; the sequence is NR. The chain crosses the membrane as a helical span at residues 260-280; sequence SWVVAISIAALYQLALDFTPL. Topologically, residues 281-304 are lumenal; sequence KSLILYGTDGSGTRVGLLNANREG. Residues 305-325 form a helical membrane-spanning segment; the sequence is IISVLGYVAVHMAGVQTGLYV. The Cytoplasmic portion of the chain corresponds to 326–337; it reads LKKRSHIKDWIK. A helical membrane pass occupies residues 338 to 358; sequence VACCILLTAIGLFISLYIVQV. The Lumenal segment spans residues 359–369; that stretch reads NVEVASRRMAN. The chain crosses the membrane as a helical span at residues 370-390; that stretch reads LAFCIWIVASCLILLSSLLLG. Topologically, residues 391 to 447 are cytoplasmic; sequence DIILSFAKFVIKEAAVPCSWKLIQSPTANKKHLESIVFDAKRKEPTLCLITAMNRNQ. Serine 415 carries the phosphoserine modification. A helical membrane pass occupies residues 448-468; the sequence is LLFFLLSNVTTGLVNLSIDTL. At 469 to 472 the chain is on the lumenal side; that stretch reads HSST. Residues 473 to 493 traverse the membrane as a helical segment; that stretch reads PWALCLLNLYMFTNCLIIYVL. The Cytoplasmic segment spans residues 494–503; it reads HLQDKTIKFW.

This sequence belongs to the PIGW family.

Its subcellular location is the endoplasmic reticulum membrane. The protein operates within glycolipid biosynthesis; glycosylphosphatidylinositol-anchor biosynthesis. Acyltransferase that catalyzes the acyl transfer from an acyl-CoA at the 2-OH position of the inositol ring of glucosaminyl phosphatidylinositol (GlcN-PI) to generate glucosaminyl acyl phosphatidylinositol (GlcN-(acyl)PI) and participates in the fourth step of GPI-anchor biosynthesis. Required for the transport of GPI-anchored proteins to the plasma membrane. Acetylation during GPI-anchor biosynthesis is not essential for the subsequent mannosylation and is usually removed soon after the attachment of GPIs to proteins. The sequence is that of Glucosaminyl-phosphatidylinositol-acyltransferase PIGW from Bos taurus (Bovine).